The following is a 61-amino-acid chain: uncharacterized protein (61 aa).

A disordered region spans residues 38-61 (TPRPFTPGLADPRRLGPRRVQAAQ).

This is an uncharacterized protein from Homo sapiens (Human).